Reading from the N-terminus, the 153-residue chain is Transmembrane inner ear expressed protein (153 aa).

Residues 1 to 28 (MAGRQHGSGRLWALGGAALGACLAGVAT) form the signal peptide. At 29–58 (QLVEPSTAPPKPKPPPLTKETVVFWDMRLW) the chain is on the extracellular side. A helical transmembrane segment spans residues 59–79 (HVVGIFSLFVLSIIITLCCVF). Over 80–153 (NCRVPRTRKE…KNEAKKKGEK (74 aa)) the chain is Cytoplasmic.

Forms the MET channel composed of TMC (TMC1 or TMC2), TMIE, TOMT, CIB (CIB2 or CIB3), LHPL5 and PCDH15. In terms of tissue distribution, expressed in brain, kidney, liver, lung and cochlea.

It localises to the membrane. Auxiliary subunit of the mechanotransducer (MET) non-specific cation channel complex located at the tips of stereocilia of cochlear hair cells and that mediates sensory transduction in the auditory system. The MET complex is composed of two dimeric pore-forming ion-conducting transmembrane TMC (TMC1 or TMC2) subunits, and aided by several auxiliary proteins including LHFPL5, TMIE, CIB2/3 and TOMT, and the tip-link PCDH15. May contribute to the formation of the pore. In Mus musculus (Mouse), this protein is Transmembrane inner ear expressed protein (Tmie).